A 55-amino-acid chain; its full sequence is Large ribosomal subunit protein bL33 (55 aa).

Belongs to the bacterial ribosomal protein bL33 family.

The protein is Large ribosomal subunit protein bL33 of Orientia tsutsugamushi (strain Boryong) (Rickettsia tsutsugamushi).